A 263-amino-acid chain; its full sequence is MTDILQEIIAHKREELVERQTRLGLAELQAAVALTAPPRNFVGAVRARMAQGQPAVIAEIKKASPSAGVIREDFNPVTIAQDYAAHGAACLSVLTDEHYFQGADLYLAAAREACPLPVLRKDFCIDPYQVWEARAIGADAILLIVAALSDAELQSLEATAQSLDLAVLVEVHDAAELQRALKLRTPLIGINNRDLRRFVTEIETTLKLLPEIPRERIVVTESGIRSREEVATLRAAGVGAFLVGEAFMRTAQPGDALQHLFFD.

It belongs to the TrpC family.

The enzyme catalyses 1-(2-carboxyphenylamino)-1-deoxy-D-ribulose 5-phosphate + H(+) = (1S,2R)-1-C-(indol-3-yl)glycerol 3-phosphate + CO2 + H2O. It participates in amino-acid biosynthesis; L-tryptophan biosynthesis; L-tryptophan from chorismate: step 4/5. The chain is Indole-3-glycerol phosphate synthase from Acidithiobacillus ferrooxidans (strain ATCC 23270 / DSM 14882 / CIP 104768 / NCIMB 8455) (Ferrobacillus ferrooxidans (strain ATCC 23270)).